Here is a 661-residue protein sequence, read N- to C-terminus: Solute carrier organic anion transporter family member 1A4 (661 aa).

At 1-20 the chain is on the cytoplasmic side; it reads MGKSEKRVATHGVRCFAKIK. Residues 21 to 40 traverse the membrane as a helical segment; sequence MFLLALTCAYVSKSLSGTYM. Residues 41-59 are Extracellular-facing; that stretch reads NSMLTQIERQFGIPTSIVG. A helical membrane pass occupies residues 60-80; sequence LINGSFEIGNLLLIIFVSYFG. At 81 to 86 the chain is on the cytoplasmic side; the sequence is TKLHRP. Residues 87–111 traverse the membrane as a helical segment; the sequence is IMIGVGCAVMGLGCFLISLPHFLMG. The Extracellular portion of the chain corresponds to 112–154; the sequence is QYEYETILPTSNVSSNSFFCVENRSQTLNPTQDPSECVKEMKS. N123 and N134 each carry an N-linked (GlcNAc...) asparagine glycan. The chain crosses the membrane as a helical span at residues 155-183; that stretch reads LMWIYVLVGNIIRGIGETPIMPLGISYIE. Over 184–202 the chain is Cytoplasmic; the sequence is DFAKSENSPLYIGILETGM. Residues 203 to 223 traverse the membrane as a helical segment; it reads TIGPLIGLLLASSCANIYVDI. Residues 224–241 are Extracellular-facing; the sequence is ESVNTDDLTITPTDTRWV. Residues 242-266 form a helical membrane-spanning segment; the sequence is GAWWIGFLVCAGVNILTSFPFFFFP. Topologically, residues 267 to 310 are cytoplasmic; it reads KTLPKEGLQENVDGTENAKEKKHRKKAKEEKRGITKDFFVFMKS. Residues 311–332 traverse the membrane as a helical segment; it reads LSCNPIYMLFILISVLQFNAFI. Over 333 to 352 the chain is Extracellular; it reads NSFTFMPKYLEQQYGKSTAE. The helical transmembrane segment at 353–376 threads the bilayer; the sequence is VVFLMGLYMLPPICLGYLIGGLIM. Topologically, residues 377–380 are cytoplasmic; that stretch reads KKFK. The helical transmembrane segment at 381–404 threads the bilayer; it reads VTVKKAAHLAFWLCLSEYLLSFLS. Topologically, residues 405 to 512 are extracellular; sequence YVMTCDNFPV…PDCANKLQYF (108 aa). Residues 432–487 enclose the Kazal-like domain; it reads NKVLADCNTRCNCSTNTWDPVCGDNGLAYMSACLAGCEKSVGTGTNMVFQNCSCIQ. Cystine bridges form between C438–C468, C444–C464, and C453–C485. N-linked (GlcNAc...) asparagine glycosylation occurs at N443. 2 N-linked (GlcNAc...) asparagine glycosylation sites follow: N482 and N491. The helical transmembrane segment at 513 to 535 threads the bilayer; it reads LIIAIFGCFIYSLAGIPGYMVLL. Residues 536–544 are Cytoplasmic-facing; the sequence is RCIKSEEKS. A helical membrane pass occupies residues 545-570; sequence LGVGLHAFCIRILAGIPAPIYFGALI. At 571–604 the chain is on the extracellular side; that stretch reads DRTCLHWGTLKCGEPGACRMYDINSFRRLYLGLP. A helical transmembrane segment spans residues 605 to 622; sequence AALRGASFVPAFFILRLT. At 623-661 the chain is on the cytoplasmic side; it reads RTFQFPGDIESSKTDHAEMKLTLKESECTEVLRSKVTED. A phosphoserine mark is found at S633 and S634.

The protein belongs to the organo anion transporter (TC 2.A.60) family. As to expression, highly expressed in brain, liver, and kidney but not expressed in heart, spleen, lung, skeletal muscle, and testis.

It localises to the cell membrane. It carries out the reaction estrone 3-sulfate(out) = estrone 3-sulfate(in). The enzyme catalyses taurocholate(out) = taurocholate(in). It catalyses the reaction prostaglandin E2(out) = prostaglandin E2(in). The catalysed reaction is L-thyroxine(out) = L-thyroxine(in). Functionally, mediates the Na(+)-independent transport of organic anions such as taurocholate, cholate, 17-beta-glucuronosyl estradiol, prostaglandin E2, estrone 3-sulfate, L-thyroxine (T4), the cardiac glycosides ouabain and digoxin and thyroid hormones. May play an especially important role in the brain accumulation and toxicity of digoxin and in the hepatobiliary and renal excretion of cardiac glycosides. Shows a pH-sensitive substrate specificity which may be ascribed to the protonation state of the binding site and leads to a stimulation of substrate transport in an acidic microenvironment. Hydrogencarbonate/HCO3(-) acts as the probable counteranion that exchanges for organic anions. The sequence is that of Solute carrier organic anion transporter family member 1A4 (Slco1a4) from Rattus norvegicus (Rat).